The chain runs to 347 residues: NADH-ubiquinone oxidoreductase chain 2 (347 aa).

The next 11 helical transmembrane spans lie at 1–21, 25–45, 59–79, 96–116, 122–142, 149–169, 178–198, 200–220, 237–257, 274–294, and 325–345; these read MNPL…MMVV, HWLL…PIMM, YLLT…INLM, TLMT…FWVP, IPLT…LSIL, INLH…GWGG, IMAY…LYNP, LTLL…MLFI, MPVI…LPPL, DMLI…YFYM, and LLPT…MLSI.

It belongs to the complex I subunit 2 family. Core subunit of respiratory chain NADH dehydrogenase (Complex I) which is composed of 45 different subunits. Interacts with TMEM242.

It localises to the mitochondrion inner membrane. The enzyme catalyses a ubiquinone + NADH + 5 H(+)(in) = a ubiquinol + NAD(+) + 4 H(+)(out). Functionally, core subunit of the mitochondrial membrane respiratory chain NADH dehydrogenase (Complex I) which catalyzes electron transfer from NADH through the respiratory chain, using ubiquinone as an electron acceptor. Essential for the catalytic activity and assembly of complex I. The polypeptide is NADH-ubiquinone oxidoreductase chain 2 (Balaenoptera physalus (Fin whale)).